Here is a 306-residue protein sequence, read N- to C-terminus: Ankyrin repeat domain-containing protein 23 (306 aa).

Positions 41-90 (QEAVAREKLKLEEEKRKKLERFNSSRLTLDNLTDLENLVQRRRKKRQRHK) form a coiled coil. The segment at 78 to 107 (LVQRRRKKRQRHKVPPREPESGAEPQPQVP) is disordered. Positions 80–91 (QRRRKKRQRHKV) are enriched in basic residues. ANK repeat units follow at residues 144–173 (LHRT…AIEV), 177–206 (LDRT…QVNA), 210–239 (IWST…HINA), and 243–272 (EGDT…KLGV). The interaction with TTN stretch occupies residues 179–196 (RTPVFWACRGGHLDILKR).

Interacts with titin/TTN and MYPN.

The protein localises to the nucleus. Functionally, may be involved in the energy metabolism. Could be a molecular link between myofibrillar stretch-induced signaling pathways and muscle gene expression. The polypeptide is Ankyrin repeat domain-containing protein 23 (Ankrd23) (Mus musculus (Mouse)).